Consider the following 214-residue polypeptide: Thiamine-phosphate synthase (214 aa).

Residues 37–41 (QLRDK) and N69 contribute to the 4-amino-2-methyl-5-(diphosphooxymethyl)pyrimidine site. D70 and D89 together coordinate Mg(2+). S108 serves as a coordination point for 4-amino-2-methyl-5-(diphosphooxymethyl)pyrimidine. A 2-[(2R,5Z)-2-carboxy-4-methylthiazol-5(2H)-ylidene]ethyl phosphate-binding site is contributed by 134-136 (TDS). K137 is a 4-amino-2-methyl-5-(diphosphooxymethyl)pyrimidine binding site. 2-[(2R,5Z)-2-carboxy-4-methylthiazol-5(2H)-ylidene]ethyl phosphate contacts are provided by residues G167 and 187 to 188 (IS).

It belongs to the thiamine-phosphate synthase family. Mg(2+) is required as a cofactor.

It carries out the reaction 2-[(2R,5Z)-2-carboxy-4-methylthiazol-5(2H)-ylidene]ethyl phosphate + 4-amino-2-methyl-5-(diphosphooxymethyl)pyrimidine + 2 H(+) = thiamine phosphate + CO2 + diphosphate. It catalyses the reaction 2-(2-carboxy-4-methylthiazol-5-yl)ethyl phosphate + 4-amino-2-methyl-5-(diphosphooxymethyl)pyrimidine + 2 H(+) = thiamine phosphate + CO2 + diphosphate. The enzyme catalyses 4-methyl-5-(2-phosphooxyethyl)-thiazole + 4-amino-2-methyl-5-(diphosphooxymethyl)pyrimidine + H(+) = thiamine phosphate + diphosphate. It participates in cofactor biosynthesis; thiamine diphosphate biosynthesis; thiamine phosphate from 4-amino-2-methyl-5-diphosphomethylpyrimidine and 4-methyl-5-(2-phosphoethyl)-thiazole: step 1/1. Condenses 4-methyl-5-(beta-hydroxyethyl)thiazole monophosphate (THZ-P) and 2-methyl-4-amino-5-hydroxymethyl pyrimidine pyrophosphate (HMP-PP) to form thiamine monophosphate (TMP). This Natronomonas pharaonis (strain ATCC 35678 / DSM 2160 / CIP 103997 / JCM 8858 / NBRC 14720 / NCIMB 2260 / Gabara) (Halobacterium pharaonis) protein is Thiamine-phosphate synthase.